Here is a 144-residue protein sequence, read N- to C-terminus: Flagellar assembly factor FliW (144 aa).

It belongs to the FliW family. As to quaternary structure, interacts with translational regulator CsrA and flagellin(s).

The protein localises to the cytoplasm. Acts as an anti-CsrA protein, binds CsrA and prevents it from repressing translation of its target genes, one of which is flagellin. Binds to flagellin and participates in the assembly of the flagellum. In Geobacillus sp. (strain WCH70), this protein is Flagellar assembly factor FliW.